The sequence spans 552 residues: Acyl-CoA-dependent acyltransferase MAC1 (552 aa).

It belongs to the trichothecene O-acetyltransferase family.

The protein operates within secondary metabolite biosynthesis. Its function is as follows. Acyl-CoA-dependent acyltransferase; part of the gene cluster that mediates the biosynthesis of mannosylerythritol lipids (MELs), surface-active substances that enhance the availability of water-insoluble substrates. Depending on the number of acetyl groups, mannosylerythritol lipids can be differentiated into MEL A (fully acetylated), MEL B and MEL C (monoacetylated at R-6 and R-4, respectively), and the fully deacetylated MEL D. The first step in the pathway is the generation of mannosylerythritol by the glycosyltransferase EMT1 which catalyzes the transfer of GDP-mannose to the C-4 atom of meso-erythritol. This reaction has to be stereospecific, since only mannosyl-D-erythritol is generated. The produced disaccharide is subsequently acylated with fatty acids of various lengths by the acyltransferases MAC1 and MAC2 at positions C-2 and C-3, repectively. The existence of MEL derivatives which carry an acetyl group at C-2 implies that at least MAC1 also accepts acetyl-CoA as a donor. The final step of MEL biosynthesis is the acetylation of the fully acylated mannosylerythritol lipids catalyzed by the acetyl-CoA-dependent acetyltransferase MAT1. MAT1 displays a relaxed regioselectivity and is able to transfer acetylgroups to both positions C-4 and C-6 of the mannosyl moiety. The sequence is that of Acyl-CoA-dependent acyltransferase MAC1 from Pseudozyma antarctica (strain T-34) (Yeast).